Reading from the N-terminus, the 244-residue chain is Cyclin-Q (244 aa).

This sequence belongs to the cyclin family. Cyclin-like FAM58 subfamily.

In terms of biological role, may be an activating cyclin for the cyclin-associated kinase CDK10. This is Cyclin-Q (ccnq) from Xenopus laevis (African clawed frog).